Consider the following 242-residue polypeptide: Transcription factor TCP17 (242 aa).

Residues 33–91 form the TCP domain; sequence GKDRHSKVCTVRGLRDRRIRLSVMTAIQVYDLQERLGLSQPSKVIDWLLEVAKNDVDLL.

In terms of assembly, interacts with SPL. Expressed in cotyledons, particularly in the vascular region, in leaves, roots, stems, buds, flowers and siliques.

It is found in the nucleus. In terms of biological role, plays a pivotal role in the control of morphogenesis of shoot organs by negatively regulating the expression of boundary-specific genes such as CUC genes, probably through the induction of miRNA (e.g. miR164). Participates in ovule development. This is Transcription factor TCP17 (TCP17) from Arabidopsis thaliana (Mouse-ear cress).